Reading from the N-terminus, the 201-residue chain is FMN-dependent NADH:quinone oxidoreductase (201 aa).

FMN contacts are provided by residues Ser-9 and 93 to 96 (MYNF).

This sequence belongs to the azoreductase type 1 family. As to quaternary structure, homodimer. FMN is required as a cofactor.

It catalyses the reaction 2 a quinone + NADH + H(+) = 2 a 1,4-benzosemiquinone + NAD(+). The enzyme catalyses N,N-dimethyl-1,4-phenylenediamine + anthranilate + 2 NAD(+) = 2-(4-dimethylaminophenyl)diazenylbenzoate + 2 NADH + 2 H(+). Quinone reductase that provides resistance to thiol-specific stress caused by electrophilic quinones. In terms of biological role, also exhibits azoreductase activity. Catalyzes the reductive cleavage of the azo bond in aromatic azo compounds to the corresponding amines. The protein is FMN-dependent NADH:quinone oxidoreductase of Bradyrhizobium sp. (strain BTAi1 / ATCC BAA-1182).